Reading from the N-terminus, the 159-residue chain is uncharacterized protein (159 aa).

4 helical membrane-spanning segments follow: residues 5–27 (TLDL…RGFV), 34–51 (ASIL…KRLV), 61–83 (SILL…MLFL), and 103–125 (FGFF…LLHV).

The protein localises to the cell membrane. This is an uncharacterized protein from Treponema pallidum (strain Nichols).